The following is a 297-amino-acid chain: MLNGIVVVNKPRGVTSSDCVYKLRKILQIRKIGHAGTLDPEVNGVLPIAIGQATKLIELMHEKPKSYIGSGMFGRATDSYDLDGKTIAEEKINTPFTSNEIIAGMEKLTGKLEQVPPIYSAVRVNGKRLYEYARENIPVERPKRKVNVYSYELTQDPEYDPLEKTESFNFAIRCSKGTYVRSLVNDLGEELGVPAVMTSLTRTSSSGYDLNQAVDLETIEAEIDTPGKWLQPIDSFFAELPQLQLSPDQFKRVSNGASISLNTSYAKVALVYNGHIKAIYRRQGKIYRPEMMLLKNE.

The Nucleophile role is filled by Asp39.

This sequence belongs to the pseudouridine synthase TruB family. Type 1 subfamily.

The catalysed reaction is uridine(55) in tRNA = pseudouridine(55) in tRNA. Responsible for synthesis of pseudouridine from uracil-55 in the psi GC loop of transfer RNAs. The protein is tRNA pseudouridine synthase B of Lactobacillus gasseri (strain ATCC 33323 / DSM 20243 / BCRC 14619 / CIP 102991 / JCM 1131 / KCTC 3163 / NCIMB 11718 / NCTC 13722 / AM63).